The primary structure comprises 146 residues: Hemoglobin subunit beta (146 aa).

One can recognise a Globin domain in the interval H2–H146. Heme b-binding residues include H63 and H92.

Belongs to the globin family. Heterotetramer of two alpha chains and two beta chains. Red blood cells.

Its function is as follows. Involved in oxygen transport from the lung to the various peripheral tissues. The chain is Hemoglobin subunit beta (HBB) from Anser anser anser (Western greylag goose).